Reading from the N-terminus, the 524-residue chain is Putative ribose/galactose/methyl galactoside import ATP-binding protein 1 (524 aa).

ABC transporter domains lie at 35-271 (LEVR…VGRE) and 281-520 (VPIG…RIMD). 67–74 (GENGAGKS) provides a ligand contact to ATP.

The protein belongs to the ABC transporter superfamily. Carbohydrate importer 2 (CUT2) (TC 3.A.1.2) family.

The protein resides in the cell inner membrane. The enzyme catalyses D-ribose(out) + ATP + H2O = D-ribose(in) + ADP + phosphate + H(+). The catalysed reaction is D-galactose(out) + ATP + H2O = D-galactose(in) + ADP + phosphate + H(+). Part of an ABC transporter complex involved in carbohydrate import. Could be involved in ribose, galactose and/or methyl galactoside import. Responsible for energy coupling to the transport system. The chain is Putative ribose/galactose/methyl galactoside import ATP-binding protein 1 from Burkholderia cenocepacia (strain HI2424).